Here is a 222-residue protein sequence, read N- to C-terminus: UPF0758 protein CT0611 (222 aa).

The MPN domain maps to 100–222 (KVKGARDVFE…WFSFRDHALL (123 aa)). The Zn(2+) site is built by His171, His173, and Asp184. A JAMM motif motif is present at residues 171 to 184 (HNHPSGDVQPSNAD).

Belongs to the UPF0758 family.

In Chlorobaculum tepidum (strain ATCC 49652 / DSM 12025 / NBRC 103806 / TLS) (Chlorobium tepidum), this protein is UPF0758 protein CT0611.